We begin with the raw amino-acid sequence, 162 residues long: UPF0114 protein PST_0950 (162 aa).

3 consecutive transmembrane segments (helical) span residues 15 to 35 (LLAPIYFGLAFALLALAIKFF), 53 to 73 (LVLTLLSLIDMALVGGLLVMV), and 136 to 156 (LMWYVIIHLTFVVSAFAMGYM).

Belongs to the UPF0114 family.

It localises to the cell membrane. The polypeptide is UPF0114 protein PST_0950 (Stutzerimonas stutzeri (strain A1501) (Pseudomonas stutzeri)).